We begin with the raw amino-acid sequence, 345 residues long: Endochitinase 4 (345 aa).

An N-terminal signal peptide occupies residues 1–27 (MAPLLNTGLVILPLIVSTLLGPMPAFA). Asparagine 29 and asparagine 89 each carry an N-linked (GlcNAc...) asparagine glycan. The region spanning 41–345 (KVLQGYWENW…TFGDNVKGRL (305 aa)) is the GH18 domain. Glutamate 163 functions as the Proton donor in the catalytic mechanism. An N-linked (GlcNAc...) asparagine glycan is attached at asparagine 316.

Belongs to the glycosyl hydrolase 18 family. Chitinase class V subfamily.

The protein localises to the secreted. The enzyme catalyses Random endo-hydrolysis of N-acetyl-beta-D-glucosaminide (1-&gt;4)-beta-linkages in chitin and chitodextrins.. Secreted chitinase involved in the degradation of chitin, a component of the cell walls of fungi and exoskeletal elements of some animals (including worms and arthropods). Participates in the infection process and directly acts in the penetration process of the host cuticle. The sequence is that of Endochitinase 4 (chi4) from Metarhizium robertsii (strain ARSEF 23 / ATCC MYA-3075) (Metarhizium anisopliae (strain ARSEF 23)).